A 158-amino-acid chain; its full sequence is Transcription elongation factor GreA (158 aa).

Positions 2 to 70 (ENQKQYPMTQ…IEQDIQRIEH (69 aa)) form a coiled coil.

This sequence belongs to the GreA/GreB family.

Necessary for efficient RNA polymerase transcription elongation past template-encoded arresting sites. The arresting sites in DNA have the property of trapping a certain fraction of elongating RNA polymerases that pass through, resulting in locked ternary complexes. Cleavage of the nascent transcript by cleavage factors such as GreA or GreB allows the resumption of elongation from the new 3'terminus. GreA releases sequences of 2 to 3 nucleotides. The chain is Transcription elongation factor GreA from Staphylococcus epidermidis (strain ATCC 35984 / DSM 28319 / BCRC 17069 / CCUG 31568 / BM 3577 / RP62A).